Reading from the N-terminus, the 74-residue chain is Putative membrane protein insertion efficiency factor (74 aa).

The protein belongs to the UPF0161 family.

It localises to the cell inner membrane. In terms of biological role, could be involved in insertion of integral membrane proteins into the membrane. The sequence is that of Putative membrane protein insertion efficiency factor from Anaeromyxobacter sp. (strain Fw109-5).